Consider the following 290-residue polypeptide: Triplex capsid protein 1 (290 aa).

It belongs to the herpesviridae TRX1 protein family. Interacts with TRX2, MCP and capsid vertex component 2/CVC2.

It localises to the virion. Its subcellular location is the host nucleus. Its function is as follows. Structural component of the T=16 icosahedral capsid. The capsid is composed of pentamers and hexamers of major capsid protein/MCP, which are linked together by heterotrimers called triplexes. These triplexes are formed by a single molecule of triplex protein 1/TRX1 and two copies of triplex protein 2/TRX2. Additionally, TRX1 is required for efficient transport of TRX2 to the nucleus, which is the site of capsid assembly. In Human cytomegalovirus (strain AD169) (HHV-5), this protein is Triplex capsid protein 1.